Here is a 186-residue protein sequence, read N- to C-terminus: Tegument protein UL55 (186 aa).

Belongs to the alphaherpesvirinae HHV-1 UL55 family.

It is found in the virion tegument. It localises to the host nucleus matrix. This Human herpesvirus 2 (strain HG52) (HHV-2) protein is Tegument protein UL55.